The chain runs to 66 residues: UPF0370 protein YpfN (66 aa).

The chain crosses the membrane as a helical span at residues 4–24 (LAKYWWILVLVFLVGVLLNVI). The interval 39–66 (KPELPPHRDFNDKWDDEEDWPKKDQPKK) is disordered. The segment covering 42 to 51 (LPPHRDFNDK) has biased composition (basic and acidic residues).

Belongs to the UPF0370 family.

It localises to the cell membrane. This chain is UPF0370 protein YpfN, found in Salmonella paratyphi A (strain AKU_12601).